The chain runs to 109 residues: uncharacterized protein (109 aa).

Transmembrane regions (helical) follow at residues 16 to 36 (YIPL…YYGL), 54 to 74 (TVYF…LLCL), and 80 to 100 (FCSS…TLAM).

The protein localises to the membrane. This is an uncharacterized protein from Schizosaccharomyces pombe (strain 972 / ATCC 24843) (Fission yeast).